Consider the following 558-residue polypeptide: Formate--tetrahydrofolate ligase (558 aa).

Residue 66-73 coordinates ATP; it reads TPAGEGKT.

The protein belongs to the formate--tetrahydrofolate ligase family.

It catalyses the reaction (6S)-5,6,7,8-tetrahydrofolate + formate + ATP = (6R)-10-formyltetrahydrofolate + ADP + phosphate. The protein operates within one-carbon metabolism; tetrahydrofolate interconversion. The chain is Formate--tetrahydrofolate ligase from Clostridioides difficile (strain 630) (Peptoclostridium difficile).